Reading from the N-terminus, the 259-residue chain is AA9 family lytic polysaccharide monooxygenase E (259 aa).

Positions 1-20 (MKATVLAGLAAVIAAQGVAG) are cleaved as a signal peptide. Cu(2+)-binding residues include His-21 and His-99. A disulfide bridge connects residues Cys-69 and Cys-193. 2 residues coordinate O2: His-179 and Gln-188. Tyr-190 contacts Cu(2+).

It belongs to the polysaccharide monooxygenase AA9 family. Cu(2+) is required as a cofactor.

The protein localises to the secreted. It catalyses the reaction [(1-&gt;4)-beta-D-glucosyl]n+m + reduced acceptor + O2 = 4-dehydro-beta-D-glucosyl-[(1-&gt;4)-beta-D-glucosyl]n-1 + [(1-&gt;4)-beta-D-glucosyl]m + acceptor + H2O.. In terms of biological role, lytic polysaccharide monooxygenase (LPMO) that depolymerizes crystalline and amorphous polysaccharides via the oxidation of scissile alpha- or beta-(1-4)-glycosidic bonds, yielding C1 or C4 oxidation products. Catalysis by LPMOs requires the reduction of the active-site copper from Cu(II) to Cu(I) by a reducing agent and H(2)O(2) or O(2) as a cosubstrate. This chain is AA9 family lytic polysaccharide monooxygenase E, found in Malbranchea cinnamomea (Thermophilic fungus).